We begin with the raw amino-acid sequence, 892 residues long: Putative GTP diphosphokinase RSH1, chloroplastic (892 aa).

The transit peptide at 1-52 directs the protein to the chloroplast; that stretch reads MQPPTGAVSGSSSSSLECVSSCRTSWRGGGRPYECSVLSCAWNAPRALTGAL. In terms of domain architecture, HD spans 184–291; sequence FIIHPVEVAR…VKLADRLHNM (108 aa). Residues 574-637 enclose the TGS domain; it reads LGSRVFVFTP…ANAEVVEIII (64 aa). An ACT domain is found at 809 to 880; the sequence is WLCIVCVDRK…MILGVLGWSV (72 aa).

Belongs to the RelA/SpoT family.

Its subcellular location is the plastid. It localises to the chloroplast. It carries out the reaction GTP + ATP = guanosine 3'-diphosphate 5'-triphosphate + AMP. May be involved in a rapid plant ppGpp (guanosine 3'-diphosphate 5'-diphosphate)-mediated response to pathogens and other stresses. This Oryza sativa subsp. japonica (Rice) protein is Putative GTP diphosphokinase RSH1, chloroplastic (RSH1).